We begin with the raw amino-acid sequence, 199 residues long: GTP-binding protein Di-Ras2 (199 aa).

GTP-binding positions include 14–21 (GAGGVGKS), 33–39 (RESYIPT), 61–65 (DTTGS), and 121–124 (NKCD). Serine 35 is subject to Phosphoserine. The short motif at 36-44 (YIPTVEDTY) is the Effector region element. The residue at position 126 (serine 126) is a Phosphoserine. 152–153 (AK) is a GTP binding site. Cysteine methyl ester is present on cysteine 196. Cysteine 196 carries S-geranylgeranyl cysteine lipidation. The propeptide at 197 to 199 (VIM) is removed in mature form.

This sequence belongs to the small GTPase superfamily. Di-Ras family. In terms of processing, ubiquitinated by the ECS(ASB11) complex via 'Lys-11'-linked ubiquitin chains, leading to its degradation by the proteasome.

It is found in the cell membrane. The enzyme catalyses GTP + H2O = GDP + phosphate + H(+). In terms of biological role, displays low GTPase activity and exists predominantly in the GTP-bound form. This Pongo abelii (Sumatran orangutan) protein is GTP-binding protein Di-Ras2 (DIRAS2).